A 105-amino-acid polypeptide reads, in one-letter code: Large ribosomal subunit protein uL24 (105 aa).

It belongs to the universal ribosomal protein uL24 family. As to quaternary structure, part of the 50S ribosomal subunit.

In terms of biological role, one of two assembly initiator proteins, it binds directly to the 5'-end of the 23S rRNA, where it nucleates assembly of the 50S subunit. Its function is as follows. One of the proteins that surrounds the polypeptide exit tunnel on the outside of the subunit. The sequence is that of Large ribosomal subunit protein uL24 from Pseudothermotoga lettingae (strain ATCC BAA-301 / DSM 14385 / NBRC 107922 / TMO) (Thermotoga lettingae).